The sequence spans 1106 residues: Probable ATP-citrate synthase (1106 aa).

Residues asparagine 358, threonine 360, and arginine 391 each coordinate citrate. Polar residues predominate over residues 442-459; that stretch reads APQTTGQFLLSPERNTGG. A disordered region spans residues 442–478; that stretch reads APQTTGQFLLSPERNTGGTERAPPSPAANATPTEHPL. ATP contacts are provided by residues 701–721 and 752–778; these read VIRYQNDDRVKMIVLLGEVGG and ITSEVQFGHAGASANALGETAACKNAA. Glutamate 718 contacts Mg(2+). The active-site Tele-phosphohistidine intermediate is histidine 760. 779 to 789 is a binding site for CoA; sequence LRASGALVPES.

In the N-terminal section; belongs to the succinate/malate CoA ligase beta subunit family. The protein in the C-terminal section; belongs to the succinate/malate CoA ligase alpha subunit family. As to quaternary structure, homotetramer.

The protein localises to the cytoplasm. It carries out the reaction oxaloacetate + acetyl-CoA + ADP + phosphate = citrate + ATP + CoA. Its function is as follows. Catalyzes the cleavage of citrate into oxaloacetate and acetyl-CoA, the latter serving as common substrate in multiple biochemical reactions in protein, carbohydrate and lipid metabolism. This is Probable ATP-citrate synthase from Caenorhabditis elegans.